The primary structure comprises 355 residues: Histidine biosynthesis bifunctional protein HisB (355 aa).

The interval 1-166 is histidinol-phosphatase; that stretch reads MKQKILFIDR…DITKEIIKRN (166 aa). The active-site Nucleophile is the D9. D9 and D11 together coordinate Mg(2+). Residue D11 is the Proton donor of the active site. Zn(2+) is bound by residues C93, H95, C101, and C103. D130 lines the Mg(2+) pocket. Residues 167–355 form an imidazoleglycerol-phosphate dehydratase region; it reads RYREVIRETK…NTLPTSKGIL (189 aa).

In the N-terminal section; belongs to the histidinol-phosphatase family. The protein in the C-terminal section; belongs to the imidazoleglycerol-phosphate dehydratase family. Mg(2+) serves as cofactor. The cofactor is Zn(2+).

The protein resides in the cytoplasm. It catalyses the reaction D-erythro-1-(imidazol-4-yl)glycerol 3-phosphate = 3-(imidazol-4-yl)-2-oxopropyl phosphate + H2O. The catalysed reaction is L-histidinol phosphate + H2O = L-histidinol + phosphate. It functions in the pathway amino-acid biosynthesis; L-histidine biosynthesis; L-histidine from 5-phospho-alpha-D-ribose 1-diphosphate: step 6/9. The protein operates within amino-acid biosynthesis; L-histidine biosynthesis; L-histidine from 5-phospho-alpha-D-ribose 1-diphosphate: step 8/9. The chain is Histidine biosynthesis bifunctional protein HisB from Buchnera aphidicola subsp. Schizaphis graminum (strain Sg).